The sequence spans 457 residues: UDP-N-acetylmuramoylalanine--D-glutamate ligase (457 aa).

126 to 132 (GTAGKGS) lines the ATP pocket.

The protein belongs to the MurCDEF family.

It localises to the cytoplasm. It catalyses the reaction UDP-N-acetyl-alpha-D-muramoyl-L-alanine + D-glutamate + ATP = UDP-N-acetyl-alpha-D-muramoyl-L-alanyl-D-glutamate + ADP + phosphate + H(+). Its pathway is cell wall biogenesis; peptidoglycan biosynthesis. Cell wall formation. Catalyzes the addition of glutamate to the nucleotide precursor UDP-N-acetylmuramoyl-L-alanine (UMA). This is UDP-N-acetylmuramoylalanine--D-glutamate ligase from Deinococcus radiodurans (strain ATCC 13939 / DSM 20539 / JCM 16871 / CCUG 27074 / LMG 4051 / NBRC 15346 / NCIMB 9279 / VKM B-1422 / R1).